The chain runs to 369 residues: MDATKWTQGFQEMMNVKPMEQIMIPNNNTHQPNTTSNARPNTILTSNGVSTAGATVSGVSNNNNNTAVVAERKARPQEKLNCPRCNSTNTKFCYYNNYSLTQPRYFCKGCRRYWTEGGSLRNVPVGGSSRKNKRSSSSSSSNILQTIPSSLPDLNPPILFSNQIHNKSKGSSQDLNLLSFPVMQDQHHHHVHMSQFLQMPKMEGNGNITHQQQPSSSSSVYGSSSSPVSALELLRTGVNVSSRSGINSSFMPSGSMMDSNTVLYTSSGFPTMVDYKPSNLSFSTDHQGLGHNSNNRSEALHSDHHQQGRVLFPFGDQMKELSSSITQEVDHDDNQQQKSHGNNNNNNNSSPNNGYWSGMFSTTGGGSSW.

The Dof-type zinc finger occupies 80-134 (LNCPRCNSTNTKFCYYNNYSLTQPRYFCKGCRRYWTEGGSLRNVPVGGSSRKNKR). Zn(2+) is bound by residues Cys-82, Cys-85, Cys-107, and Cys-110. Disordered regions lie at residues 120-149 (LRNVPVGGSSRKNKRSSSSSSSNILQTIPS), 203-224 (EGNGNITHQQQPSSSSSVYGSS), 284-304 (TDHQGLGHNSNNRSEALHSDH), and 322-369 (SSSI…GSSW). The segment covering 214–224 (PSSSSSVYGSS) has biased composition (low complexity). Polar residues predominate over residues 284-297 (TDHQGLGHNSNNRS). Positions 342–362 (NNNNNNNSSPNNGYWSGMFST) are enriched in low complexity.

In terms of tissue distribution, expressed in the vascular system of the mother plant, but not present in the seed and embryo. In maturing siliques, found all through the funiculus connecting the placenta to the ovule, but not in the ovule.

The protein localises to the nucleus. In terms of biological role, transcription factor specifically involved in the maternal control of seed germination. Regulates transcription by binding to a 5'-AA[AG]G-3' consensus core sequence. May ensure the activation of a component that would trigger germination as a consequence of red light perception. This is Dof zinc finger protein DOF2.5 (DOF2.5) from Arabidopsis thaliana (Mouse-ear cress).